The chain runs to 255 residues: tRNA (adenine(58)-N(1))-methyltransferase TrmI (255 aa).

Residues 104 to 107 (SGGL), glutamate 125, histidine 130, glutamate 155, and aspartate 170 contribute to the S-adenosyl-L-methionine site.

Belongs to the class I-like SAM-binding methyltransferase superfamily. TRM61 family. As to quaternary structure, homotetramer composed of a dimer of dimers.

It carries out the reaction adenosine(58) in tRNA + S-adenosyl-L-methionine = N(1)-methyladenosine(58) in tRNA + S-adenosyl-L-homocysteine + H(+). In terms of biological role, catalyzes the S-adenosyl-L-methionine-dependent formation of N(1)-methyladenine at position 58 (m1A58) in tRNA. Is required for cell growth at extreme temperatures. The polypeptide is tRNA (adenine(58)-N(1))-methyltransferase TrmI (trmI) (Thermus thermophilus (strain ATCC BAA-163 / DSM 7039 / HB27)).